Consider the following 504-residue polypeptide: Ribonuclease Y (504 aa).

Positions 194 to 279 constitute a KH domain; it reads TVHVVSLPND…EMVEKAKQEV (86 aa). In terms of domain architecture, HD spans 320 to 413; sequence VLKHSMEVAY…VQAADAISAA (94 aa).

Belongs to the RNase Y family.

Its function is as follows. Endoribonuclease that initiates mRNA decay. In Clostridium novyi (strain NT), this protein is Ribonuclease Y.